Consider the following 262-residue polypeptide: Small ribosomal subunit protein eS1 (262 aa).

Residues 1–18 are compositionally biased toward basic residues; that stretch reads MAVGKNKRISKGKKGSKK. A disordered region spans residues 1–20; sequence MAVGKNKRISKGKKGSKKKT.

It belongs to the eukaryotic ribosomal protein eS1 family. As to quaternary structure, component of the small ribosomal subunit. Mature ribosomes consist of a small (40S) and a large (60S) subunit. The 40S subunit contains about 33 different proteins and 1 molecule of RNA (18S). The 60S subunit contains about 49 different proteins and 3 molecules of RNA (25S, 5.8S and 5S).

It is found in the cytoplasm. The chain is Small ribosomal subunit protein eS1 from Oryza sativa subsp. japonica (Rice).